The following is a 544-amino-acid chain: Intercellular adhesion molecule 3 (544 aa).

An N-terminal signal peptide occupies residues Met1 to Gly31. Residues Gln32–Val486 are Extracellular-facing. Positions Gly48–Ser105 constitute an Ig-like C2-type 1 domain. 12 N-linked (GlcNAc...) asparagine glycosylation sites follow: Asn54, Asn89, Asn103, Asn112, Asn138, Asn190, Asn209, Asn243, Asn267, Asn296, Asn321, and Asn326. Disulfide bonds link Cys55-Cys98 and Cys59-Cys102. Residues Gly134–Arg200 enclose the Ig-like C2-type 2 domain. An intrachain disulfide couples Cys141 to Cys193. The 66-residue stretch at Glu237 to Glu302 folds into the Ig-like C2-type 3 domain. A disulfide bridge links Cys244 with Cys295. One can recognise an Ig-like C2-type 4 domain in the interval Gly330 to His383. A disulfide bridge links Cys337 with Cys376. Residues Asn377, Asn390, and Asn456 are each glycosylated (N-linked (GlcNAc...) asparagine). Residues Lys417–Gly470 form the Ig-like C2-type 5 domain. Cys424 and Cys463 are disulfide-bonded. Residues Thr487–Phe511 traverse the membrane as a helical segment. The Cytoplasmic portion of the chain corresponds to Trp512 to Ser544.

It belongs to the immunoglobulin superfamily. ICAM family. As to quaternary structure, interacts with moesin/MSN. In terms of tissue distribution, leukocytes.

It is found in the membrane. Functionally, ICAM proteins are ligands for the leukocyte adhesion protein LFA-1 (integrin alpha-L/beta-2). ICAM3 is also a ligand for integrin alpha-D/beta-2. In association with integrin alpha-L/beta-2, contributes to apoptotic neutrophil phagocytosis by macrophages. The protein is Intercellular adhesion molecule 3 (ICAM3) of Bos taurus (Bovine).